Consider the following 97-residue polypeptide: NADH-quinone oxidoreductase subunit K (97 aa).

3 helical membrane-spanning segments follow: residues Met1 to Tyr21, Ile25 to Tyr45, and Val57 to Leu77.

This sequence belongs to the complex I subunit 4L family. As to quaternary structure, NDH-1 is composed of 14 different subunits. Subunits NuoA, H, J, K, L, M, N constitute the membrane sector of the complex.

It is found in the cell inner membrane. It carries out the reaction a quinone + NADH + 5 H(+)(in) = a quinol + NAD(+) + 4 H(+)(out). In terms of biological role, NDH-1 shuttles electrons from NADH, via FMN and iron-sulfur (Fe-S) centers, to quinones in the respiratory chain. The immediate electron acceptor for the enzyme in this species is believed to be a menaquinone. Couples the redox reaction to proton translocation (for every two electrons transferred, four hydrogen ions are translocated across the cytoplasmic membrane), and thus conserves the redox energy in a proton gradient. This Cytophaga hutchinsonii (strain ATCC 33406 / DSM 1761 / CIP 103989 / NBRC 15051 / NCIMB 9469 / D465) protein is NADH-quinone oxidoreductase subunit K.